The following is a 293-amino-acid chain: Shikimate dehydrogenase (NADP(+)) (293 aa).

Shikimate-binding positions include 26 to 28 and T73; that span reads SKS. Residue K77 is the Proton acceptor of the active site. D89 contributes to the NADP(+) binding site. Residues N98 and D113 each contribute to the shikimate site. NADP(+) contacts are provided by residues 137–141, 161–166, and I231; these read GAGGA and NRTKQR. Y233 serves as a coordination point for shikimate. G254 lines the NADP(+) pocket.

The protein belongs to the shikimate dehydrogenase family. Homodimer.

The enzyme catalyses shikimate + NADP(+) = 3-dehydroshikimate + NADPH + H(+). Its pathway is metabolic intermediate biosynthesis; chorismate biosynthesis; chorismate from D-erythrose 4-phosphate and phosphoenolpyruvate: step 4/7. Involved in the biosynthesis of the chorismate, which leads to the biosynthesis of aromatic amino acids. Catalyzes the reversible NADPH linked reduction of 3-dehydroshikimate (DHSA) to yield shikimate (SA). In Bartonella henselae (strain ATCC 49882 / DSM 28221 / CCUG 30454 / Houston 1) (Rochalimaea henselae), this protein is Shikimate dehydrogenase (NADP(+)).